The primary structure comprises 506 residues: Steroid (22S)-hydroxylase (506 aa).

The helical transmembrane segment at 12 to 32 (LLFFLPFILLALLTFYTTTVA) threads the bilayer. A heme-binding site is contributed by Cys449.

This sequence belongs to the cytochrome P450 family. It depends on heme as a cofactor. In terms of tissue distribution, highly expressed in roots and leaf blades. Expressed in shoot apex, stems, leaf sheaths, inflorescences and flowers.

It is found in the membrane. It catalyses the reaction a C28-steroid + reduced [NADPH--hemoprotein reductase] + O2 = a (22S)-22-hydroxy C28-steroid + oxidized [NADPH--hemoprotein reductase] + H2O + H(+). The catalysed reaction is campesterol + reduced [NADPH--hemoprotein reductase] + O2 = (22S)-22-hydroxycampesterol + oxidized [NADPH--hemoprotein reductase] + H2O + H(+). The enzyme catalyses campestanol + reduced [NADPH--hemoprotein reductase] + O2 = 6-deoxycathasterone + oxidized [NADPH--hemoprotein reductase] + H2O + H(+). It functions in the pathway plant hormone biosynthesis; brassinosteroid biosynthesis. Catalyzes the C22-alpha-hydroxylation step in brassinosteroid biosynthesis, which is the rate-limiting step in this biosynthetic pathway. Catalyzes the conversion of campesterol (CR) to (22S)-22-hydroxycampesterol (22-OHCR, 22-hydroxyCR) and of campestanol (CN) to 6-deoxycathasterone (6-deoxoCT). Required for auxin responses involved in the regulation of epidermal cells length of the lamina joint. The sequence is that of Steroid (22S)-hydroxylase from Oryza sativa subsp. japonica (Rice).